The sequence spans 328 residues: Beta-ketoacyl-[acyl-carrier-protein] synthase III 2 (328 aa).

Residues C113 and H255 contribute to the active site. Positions 256–260 are ACP-binding; that stretch reads QANAR. N285 is a catalytic residue.

This sequence belongs to the thiolase-like superfamily. FabH family. Homodimer.

It is found in the cytoplasm. It catalyses the reaction malonyl-[ACP] + acetyl-CoA + H(+) = 3-oxobutanoyl-[ACP] + CO2 + CoA. The protein operates within lipid metabolism; fatty acid biosynthesis. Functionally, catalyzes the condensation reaction of fatty acid synthesis by the addition to an acyl acceptor of two carbons from malonyl-ACP. Catalyzes the first condensation reaction which initiates fatty acid synthesis and may therefore play a role in governing the total rate of fatty acid production. Possesses both acetoacetyl-ACP synthase and acetyl transacylase activities. Its substrate specificity determines the biosynthesis of branched-chain and/or straight-chain of fatty acids. In Lactiplantibacillus plantarum (strain ATCC BAA-793 / NCIMB 8826 / WCFS1) (Lactobacillus plantarum), this protein is Beta-ketoacyl-[acyl-carrier-protein] synthase III 2.